Reading from the N-terminus, the 229-residue chain is Large ribosomal subunit protein uL1 (229 aa).

Belongs to the universal ribosomal protein uL1 family. As to quaternary structure, part of the 50S ribosomal subunit.

In terms of biological role, binds directly to 23S rRNA. The L1 stalk is quite mobile in the ribosome, and is involved in E site tRNA release. Its function is as follows. Protein L1 is also a translational repressor protein, it controls the translation of the L11 operon by binding to its mRNA. In Streptococcus thermophilus (strain CNRZ 1066), this protein is Large ribosomal subunit protein uL1.